Here is a 75-residue protein sequence, read N- to C-terminus: Guanine nucleotide-binding protein G(I)/G(S)/G(O) subunit gamma-4 (75 aa).

C72 is subject to Cysteine methyl ester. A lipid anchor (S-geranylgeranyl cysteine) is attached at C72. Positions 73–75 (TIL) are cleaved as a propeptide — removed in mature form.

Belongs to the G protein gamma family. G proteins are composed of 3 units, alpha, beta and gamma. Interacts with beta-1 and beta-2, but not with beta-3. Interacts with KCNK1. Interacts (via C-terminus) with KCNK2/TREK-1 (via N-terminus); this interaction confers ion selectivity to Cl(-) and L-glutamate. In terms of tissue distribution, brain, kidney, pancreas, skeletal muscle and faintly in cardiac muscle.

The protein resides in the cell membrane. Its function is as follows. Guanine nucleotide-binding proteins (G proteins) are involved as a modulator or transducer in various transmembrane signaling systems. The beta and gamma chains are required for the GTPase activity, for replacement of GDP by GTP, and for G protein-effector interaction. The protein is Guanine nucleotide-binding protein G(I)/G(S)/G(O) subunit gamma-4 (GNG4) of Homo sapiens (Human).